The chain runs to 445 residues: E3 ubiquitin-protein ligase MYLIP (445 aa).

Residues 1-279 (MLCYVTRPDA…ETHAFYRCDT (279 aa)) form the FERM domain. The interval 341–363 (RNDQSPPSSPLKSSDSSMSCSSC) is disordered. Positions 350–363 (PLKSSDSSMSCSSC) are enriched in low complexity. 3 residues coordinate Fe cation: C360, C363, and C368. The RING-type zinc finger occupies 387–422 (CMVCCEEEINSTFCPCGHTVCCESCAAQLQSCPVCR). Residues 431 to 433 (VYL) form a critical for homodimerization region.

In terms of assembly, homodimer. Interacts with the E2 ubiquitin-conjugating enzyme, UBE2D1 (via RING-type zinc finger). Interacts with myosin regulatory light chain (MRLC) and TMEM4. Post-translationally, autoubiquitinated. As to expression, expressed in developing and adult brain, hippocampus, cerebellum, cerebral cortex, thalamus and substantia nigra. Predominantly found in neurons.

It is found in the cytoplasm. The protein localises to the cell membrane. The catalysed reaction is S-ubiquitinyl-[E2 ubiquitin-conjugating enzyme]-L-cysteine + [acceptor protein]-L-lysine = [E2 ubiquitin-conjugating enzyme]-L-cysteine + N(6)-ubiquitinyl-[acceptor protein]-L-lysine.. The protein operates within protein modification; protein ubiquitination. With respect to regulation, can bind 1 iron ion per dimer. Iron binding seems to decrease LDLR degradation activity. Its function is as follows. E3 ubiquitin-protein ligase that mediates ubiquitination and subsequent proteasomal degradation of myosin regulatory light chain (MRLC), LDLR, VLDLR and LRP8. Activity depends on E2 enzymes of the UBE2D family. Proteasomal degradation of MRLC leads to inhibit neurite outgrowth in presence of NGF by counteracting the stabilization of MRLC by saposin-like protein (CNPY2/MSAP) and reducing CNPY2-stimulated neurite outgrowth. Acts as a sterol-dependent inhibitor of cellular cholesterol uptake by mediating ubiquitination and subsequent degradation of LDLR. This chain is E3 ubiquitin-protein ligase MYLIP (Mylip), found in Rattus norvegicus (Rat).